A 355-amino-acid chain; its full sequence is RNA 3'-terminal phosphate cyclase (355 aa).

ATP-binding positions include glutamine 109 and 291–295; that span reads HLADQ. Histidine 316 serves as the catalytic Tele-AMP-histidine intermediate.

Belongs to the RNA 3'-terminal cyclase family. Type 1 subfamily.

It localises to the cytoplasm. The catalysed reaction is a 3'-end 3'-phospho-ribonucleotide-RNA + ATP = a 3'-end 2',3'-cyclophospho-ribonucleotide-RNA + AMP + diphosphate. Its function is as follows. Catalyzes the conversion of 3'-phosphate to a 2',3'-cyclic phosphodiester at the end of RNA. The mechanism of action of the enzyme occurs in 3 steps: (A) adenylation of the enzyme by ATP; (B) transfer of adenylate to an RNA-N3'P to produce RNA-N3'PP5'A; (C) and attack of the adjacent 2'-hydroxyl on the 3'-phosphorus in the diester linkage to produce the cyclic end product. The biological role of this enzyme is unknown but it is likely to function in some aspects of cellular RNA processing. The chain is RNA 3'-terminal phosphate cyclase from Koribacter versatilis (strain Ellin345).